The following is a 250-amino-acid chain: uncharacterized protein (250 aa).

The span at leucine 207–valine 226 shows a compositional bias: basic and acidic residues. Residues leucine 207 to serine 250 form a disordered region. Low complexity predominate over residues serine 233–serine 250.

It localises to the plastid. The protein resides in the chloroplast. This is an uncharacterized protein from Chlorella vulgaris (Green alga).